We begin with the raw amino-acid sequence, 362 residues long: Porin Omp2b (362 aa).

The first 22 residues, 1–22, serve as a signal peptide directing secretion; the sequence is MNIKSLLLGSAAALVAASGAQA.

The protein belongs to the alphaproteobacteria porin family. As to quaternary structure, homotrimer.

The protein localises to the cell outer membrane. In terms of biological role, forms passive diffusion pores that allow small molecular weight hydrophilic materials across the outer membrane. The sequence is that of Porin Omp2b (omp2b) from Brucella suis biovar 1 (strain 1330).